We begin with the raw amino-acid sequence, 114 residues long: MELMNKKVMMKLALMVFLLSFAANVVNARFDSTSFITQVLSNGDDVKSACCDTCLCTKSDPPTCRCVDVGETCHSACDSCICALSYPPQCQCFDTHKFCYKACHNSEVEEVIKN.

The first 28 residues, 1 to 28 (MELMNKKVMMKLALMVFLLSFAANVVNA), serve as a signal peptide directing secretion. The propeptide occupies 29 to 42 (RFDSTSFITQVLSN). 7 disulfides stabilise this stretch: Cys50/Cys103, Cys51/Cys66, Cys54/Cys99, Cys56/Cys64, Cys73/Cys80, Cys77/Cys92, and Cys82/Cys90.

This sequence belongs to the Bowman-Birk serine protease inhibitor family. Seed.

Its function is as follows. Inhibitor of trypsin and of chymotrypsin. May function as a natural phytochemical defense against predators. The protein is Seed trypsin/chymotrypsin inhibitor TI5-72 (TI572) of Pisum sativum (Garden pea).